We begin with the raw amino-acid sequence, 394 residues long: Phosphopentomutase (394 aa).

Mn(2+) is bound by residues Asp13, Asp286, His291, Asp327, His328, and His339.

The protein belongs to the phosphopentomutase family. Mn(2+) is required as a cofactor.

The protein resides in the cytoplasm. It carries out the reaction 2-deoxy-alpha-D-ribose 1-phosphate = 2-deoxy-D-ribose 5-phosphate. It catalyses the reaction alpha-D-ribose 1-phosphate = D-ribose 5-phosphate. It participates in carbohydrate degradation; 2-deoxy-D-ribose 1-phosphate degradation; D-glyceraldehyde 3-phosphate and acetaldehyde from 2-deoxy-alpha-D-ribose 1-phosphate: step 1/2. Isomerase that catalyzes the conversion of deoxy-ribose 1-phosphate (dRib-1-P) and ribose 1-phosphate (Rib-1-P) to deoxy-ribose 5-phosphate (dRib-5-P) and ribose 5-phosphate (Rib-5-P), respectively. The polypeptide is Phosphopentomutase (Bacillus thuringiensis (strain Al Hakam)).